The primary structure comprises 94 residues: Defensin alpha 5 (94 aa).

The first 19 residues, 1-19 (MRTIAILAAILLVALQAQA), serve as a signal peptide directing secretion. 3 disulfide bridges follow: Cys65-Cys93, Cys67-Cys82, and Cys72-Cys92.

This sequence belongs to the alpha-defensin family. As to quaternary structure, homodimer. Homotetramer. Interacts with B.antracis lef/lethal factor. In terms of processing, glycosylated. Post-translationally, proteolytically cleaved at Arg-62 by trypsin. Both the propeptide form proHD5/HD5(20-94) and HD5(56-94) are cleaved into the lumenal peptide form HD5(63-94) by trypsin. Unprocessed proHD5 exerts antimicrobial activities, but peptide potency is enhanced by peptide processing. Proteolytically cleaved in duodenal fluid; derived fragments are antimicrobially active against commensal bacteria (in vitro).

It localises to the secreted. The protein resides in the cytoplasmic vesicle. The protein localises to the secretory vesicle. In terms of biological role, host-defense peptide that maintains sterility in the urogenital system. Has antimicrobial activity against a wide range of bacteria, including Gram-negative E.coli, P.aeruginosa and S.typhimurium, and Gram-positive E.aerogenes, S.aureus, B.cereus, E.faecium and L.monocytogenes. Confers resistance to intestinal infection by S.typhimurium. Exhibits antimicrobial activity against enteric commensal bacteria such as B.adolescentis, L.acidophilus, B.breve, L.fermentum, B.longum and S.thermophilus. Binds to bacterial membranes and causes membrane disintegration. Induces the secretion of the chemokine IL-8 by intestinal epithelial cells. Binds to B.antracis lef/lethal factor, a major virulence factor from B.anthracis, and neutralizes its enzymatic activity. This Pan troglodytes (Chimpanzee) protein is Defensin alpha 5 (DEFA5).